Consider the following 542-residue polypeptide: Chaperonin GroEL 2 (542 aa).

Residues 30–33 (TLGP), Lys-51, 87–91 (DGTTT), Gly-415, and Asp-496 each bind ATP.

This sequence belongs to the chaperonin (HSP60) family. In terms of assembly, forms a cylinder of 14 subunits composed of two heptameric rings stacked back-to-back. Interacts with the co-chaperonin GroES.

It localises to the cytoplasm. It catalyses the reaction ATP + H2O + a folded polypeptide = ADP + phosphate + an unfolded polypeptide.. Together with its co-chaperonin GroES, plays an essential role in assisting protein folding. The GroEL-GroES system forms a nano-cage that allows encapsulation of the non-native substrate proteins and provides a physical environment optimized to promote and accelerate protein folding. The protein is Chaperonin GroEL 2 of Rhizobium etli (strain ATCC 51251 / DSM 11541 / JCM 21823 / NBRC 15573 / CFN 42).